Consider the following 257-residue polypeptide: Imidazole glycerol phosphate synthase subunit HisF (257 aa).

Residues aspartate 12 and aspartate 131 contribute to the active site.

Belongs to the HisA/HisF family. As to quaternary structure, heterodimer of HisH and HisF.

Its subcellular location is the cytoplasm. The catalysed reaction is 5-[(5-phospho-1-deoxy-D-ribulos-1-ylimino)methylamino]-1-(5-phospho-beta-D-ribosyl)imidazole-4-carboxamide + L-glutamine = D-erythro-1-(imidazol-4-yl)glycerol 3-phosphate + 5-amino-1-(5-phospho-beta-D-ribosyl)imidazole-4-carboxamide + L-glutamate + H(+). It participates in amino-acid biosynthesis; L-histidine biosynthesis; L-histidine from 5-phospho-alpha-D-ribose 1-diphosphate: step 5/9. Its function is as follows. IGPS catalyzes the conversion of PRFAR and glutamine to IGP, AICAR and glutamate. The HisF subunit catalyzes the cyclization activity that produces IGP and AICAR from PRFAR using the ammonia provided by the HisH subunit. In Rhodococcus jostii (strain RHA1), this protein is Imidazole glycerol phosphate synthase subunit HisF.